A 309-amino-acid chain; its full sequence is Zinc transporter ZIP2 (309 aa).

Over 1-8 (MEVLLGVK) the chain is Extracellular. A helical membrane pass occupies residues 9-29 (IGCLLALLVLTLGCGLTPIYV). The Cytoplasmic segment spans residues 30–43 (KWFQMDAATGHHHR). The chain crosses the membrane as a helical span at residues 44–64 (VLSLLGCTSAGVFLGAGLMHM). Residues 65–103 (TAEALEGIESEIQKFVEQNSTGSKGNSSRDAASSYVEYP) are Extracellular-facing. A helical membrane pass occupies residues 104–124 (YGELVISLGFFFVFLLESLAL). Residues 125–164 (QCCHGAAGGSTVQEEEWGGTHAFGFHKHPAVPSPSRGPLR) lie on the Cytoplasmic side of the membrane. A helical transmembrane segment spans residues 165–185 (ALVLLLSLSFHSVFEGLAVGL). Zn(2+)-binding residues include histidine 175 and glutamate 179. Topologically, residues 186–191 (QATVAA) are extracellular. Residues 192–212 (TIQLCVAVLAHKGLVVFSVGL) form a helical membrane-spanning segment. Residue histidine 202 coordinates Zn(2+). Over 213–225 (RLGKIGTGPRWAT) the chain is Cytoplasmic. The helical transmembrane segment at 226 to 246 (FCILSLALMSPVGLALGLTVA) threads the bilayer. Residues 247–258 (GGASGQTQGLAQ) lie on the Extracellular side of the membrane. A helical transmembrane segment spans residues 259–279 (AVLEGIAAGTFLYVTFLEILP). Glutamate 276 is a Zn(2+) binding site. At 280–288 (RELACPEAP) the chain is on the cytoplasmic side. The helical transmembrane segment at 289 to 309 (LAKYSCVAAGFAFMALIALWA) threads the bilayer.

Belongs to the ZIP transporter (TC 2.A.5) family. In terms of tissue distribution, high expression in the liver, skin and ovary.

It localises to the cell membrane. The catalysed reaction is Zn(2+)(in) = Zn(2+)(out). It catalyses the reaction Cd(2+)(in) = Cd(2+)(out). Its function is as follows. Transporter for the divalent cation Zn(2+). Mediates the influx of Zn(2+) into cells from extracellular space. The Zn(2+) uniporter activity is independent of H(+)-driving force, but is modulated by extracellular pH and membrane potential. Transports also other divalent cations Zn(2+), Cd2(+), Cu2(+), Co2(+) in the order of decreasing affinity, respectively. In the skin, aids in the differentiation of keratinocytes in the epidermis. The chain is Zinc transporter ZIP2 (Slc39a2) from Mus musculus (Mouse).